Consider the following 201-residue polypeptide: MATSHSLKAETRACGSGNLKQLRSQGLVPGVVYGPGFDNVNIQVDAREFARMLASAVSEHILVALDINGKIVKVLLKEVQHNPITNACLHVDFQAVTDTTVIHSIVPVILEGDSAGVALGGVLDQTIHELAIICQVKDLPEAITADISGLKLGESLRITDLKLPSGVTTELAGDVIVAIVEAPRVSGEEAAPAAEEAVAEK.

Belongs to the bacterial ribosomal protein bL25 family. CTC subfamily. Part of the 50S ribosomal subunit; part of the 5S rRNA/L5/L18/L25 subcomplex. Contacts the 5S rRNA. Binds to the 5S rRNA independently of L5 and L18.

Functionally, this is one of the proteins that binds to the 5S RNA in the ribosome where it forms part of the central protuberance. The protein is Large ribosomal subunit protein bL25 of Akkermansia muciniphila (strain ATCC BAA-835 / DSM 22959 / JCM 33894 / BCRC 81048 / CCUG 64013 / CIP 107961 / Muc).